A 234-amino-acid polypeptide reads, in one-letter code: Leucyl/phenylalanyl-tRNA--protein transferase (234 aa).

This sequence belongs to the L/F-transferase family.

Its subcellular location is the cytoplasm. It catalyses the reaction N-terminal L-lysyl-[protein] + L-leucyl-tRNA(Leu) = N-terminal L-leucyl-L-lysyl-[protein] + tRNA(Leu) + H(+). The enzyme catalyses N-terminal L-arginyl-[protein] + L-leucyl-tRNA(Leu) = N-terminal L-leucyl-L-arginyl-[protein] + tRNA(Leu) + H(+). The catalysed reaction is L-phenylalanyl-tRNA(Phe) + an N-terminal L-alpha-aminoacyl-[protein] = an N-terminal L-phenylalanyl-L-alpha-aminoacyl-[protein] + tRNA(Phe). In terms of biological role, functions in the N-end rule pathway of protein degradation where it conjugates Leu, Phe and, less efficiently, Met from aminoacyl-tRNAs to the N-termini of proteins containing an N-terminal arginine or lysine. This Shigella dysenteriae serotype 1 (strain Sd197) protein is Leucyl/phenylalanyl-tRNA--protein transferase.